Consider the following 152-residue polypeptide: UPF0336 protein Tfu_2666 (152 aa).

Positions 7–116 (YLGRAYELPE…TTITDIKSLA (110 aa)) constitute a MaoC-like domain.

Belongs to the UPF0336 family.

The sequence is that of UPF0336 protein Tfu_2666 from Thermobifida fusca (strain YX).